Reading from the N-terminus, the 430-residue chain is Tol-Pal system protein TolB (430 aa).

An N-terminal signal peptide occupies residues 1 to 21 (MKQALRVAFGFLMLWAAMLHA).

It belongs to the TolB family. As to quaternary structure, the Tol-Pal system is composed of five core proteins: the inner membrane proteins TolA, TolQ and TolR, the periplasmic protein TolB and the outer membrane protein Pal. They form a network linking the inner and outer membranes and the peptidoglycan layer.

The protein localises to the periplasm. Functionally, part of the Tol-Pal system, which plays a role in outer membrane invagination during cell division and is important for maintaining outer membrane integrity. TolB occupies a key intermediary position in the Tol-Pal system because it communicates directly with both membrane-embedded components, Pal in the outer membrane and TolA in the inner membrane. This Escherichia fergusonii (strain ATCC 35469 / DSM 13698 / CCUG 18766 / IAM 14443 / JCM 21226 / LMG 7866 / NBRC 102419 / NCTC 12128 / CDC 0568-73) protein is Tol-Pal system protein TolB.